The chain runs to 743 residues: Threonine synthase-like 1 (743 aa).

Lys281 is subject to N6-acetyllysine. Residue Lys351 is modified to N6-(pyridoxal phosphate)lysine.

The protein belongs to the threonine synthase family. It depends on pyridoxal 5'-phosphate as a cofactor.

The chain is Threonine synthase-like 1 (THNSL1) from Homo sapiens (Human).